The chain runs to 60 residues: Large ribosomal subunit protein uL30 (60 aa).

Belongs to the universal ribosomal protein uL30 family. In terms of assembly, part of the 50S ribosomal subunit.

In Polaromonas naphthalenivorans (strain CJ2), this protein is Large ribosomal subunit protein uL30.